The sequence spans 530 residues: UPF0422 protein lpg2959 (530 aa).

Residues 1–19 (MKFKKIILALACLSSPLYA) form the signal peptide. Residues 20–66 (DQDQQLKSEIQRLQHQAEDLQAQLNRLQKQLANHKSSQQKHEQQAAA) are a coiled coil. A disordered region spans residues 50 to 81 (LANHKSSQQKHEQQAAAKPAEPQSKPTVKSGA). Residues 63 to 75 (QAAAKPAEPQSKP) are compositionally biased toward low complexity.

It belongs to the UPF0422 family.

In Legionella pneumophila subsp. pneumophila (strain Philadelphia 1 / ATCC 33152 / DSM 7513), this protein is UPF0422 protein lpg2959.